A 504-amino-acid chain; its full sequence is Cytoplasmic dynein 1 light intermediate chain 1 (504 aa).

35-42 (GDPTSGKS) provides a ligand contact to ATP. 3 stretches are compositionally biased toward low complexity: residues 167–189 (TTTA…TNKT), 392–425 (NSPS…NTPL), and 437–446 (SSNNPVAASP). 3 disordered regions span residues 167-195 (TTTA…TTDK), 383-446 (LDND…AASP), and 464-504 (DKTS…QQKK). A compositionally biased stretch (basic and acidic residues) spans 464-473 (DKTSSRKDLK). A compositionally biased stretch (polar residues) spans 475–487 (SLASPPTTSVSSN). Basic and acidic residues predominate over residues 488–504 (AREDAKKELDKLKQQKK).

The protein belongs to the dynein light intermediate chain family. In terms of assembly, homodimer. The cytoplasmic dynein 1 complex consists of two catalytic heavy chains (HCs) and a number of non-catalytic subunits presented by intermediate chains (ICs), light intermediate chains (LICs) and light chains (LCs).

The protein resides in the cytoplasm. It is found in the cytoskeleton. Acts as one of several non-catalytic accessory components of the cytoplasmic dynein 1 complex that are thought to be involved in linking dynein to cargos and to adapter proteins that regulate dynein function. Cytoplasmic dynein 1 acts as a motor for the intracellular retrograde motility of vesicles and organelles along microtubules. May play a role in binding dynein to membranous organelles or chromosomes. This chain is Cytoplasmic dynein 1 light intermediate chain 1 (dync1li1), found in Dictyostelium discoideum (Social amoeba).